Reading from the N-terminus, the 108-residue chain is Large ribosomal subunit protein uL11 (108 aa).

The protein belongs to the universal ribosomal protein uL11 family. In terms of assembly, part of the ribosomal stalk of the 50S ribosomal subunit. Interacts with L10 and the large rRNA to form the base of the stalk. L10 forms an elongated spine to which L12 dimers bind in a sequential fashion forming a multimeric L10(L12)X complex.

In terms of biological role, forms part of the ribosomal stalk which helps the ribosome interact with GTP-bound translation factors. The sequence is that of Large ribosomal subunit protein uL11 (rpl11) from Aeropyrum pernix (strain ATCC 700893 / DSM 11879 / JCM 9820 / NBRC 100138 / K1).